The primary structure comprises 277 residues: MARSSIEQLTSFLKSVNGRAKKALSQNFLVDGNILRKILATADVQPGDWVLEIGPGFGALSEVLVSQGANVIALEKDPMFEESLSQLPIDIEITDACKYPLASLDDKGWKGKGRIVANLPYHITTPLLTKFFLECPNRWKTVTVMIQDEVARRITANPGDKDYSSLTVFLRFFADVQYAFKVSPNCFYPKPSVSSAVVHMRVHEDFPLSGSEIDEFFALTRAAFGQRRKLLANSLKNLYPKDKVFQVLEHLGFSEKTRPETISLEEYLKIFRLLKDF.

S-adenosyl-L-methionine-binding residues include Asn-27, Leu-29, Gly-54, Glu-75, Asp-95, and Asn-118.

The protein belongs to the class I-like SAM-binding methyltransferase superfamily. rRNA adenine N(6)-methyltransferase family. RsmA subfamily.

The protein localises to the cytoplasm. It catalyses the reaction adenosine(1518)/adenosine(1519) in 16S rRNA + 4 S-adenosyl-L-methionine = N(6)-dimethyladenosine(1518)/N(6)-dimethyladenosine(1519) in 16S rRNA + 4 S-adenosyl-L-homocysteine + 4 H(+). Its function is as follows. Specifically dimethylates two adjacent adenosines (A1518 and A1519) in the loop of a conserved hairpin near the 3'-end of 16S rRNA in the 30S particle. May play a critical role in biogenesis of 30S subunits. The sequence is that of Ribosomal RNA small subunit methyltransferase A from Chlamydia muridarum (strain MoPn / Nigg).